We begin with the raw amino-acid sequence, 87 residues long: UPF0248 protein TON_0940 (87 aa).

It belongs to the UPF0248 family.

This Thermococcus onnurineus (strain NA1) protein is UPF0248 protein TON_0940.